The following is a 314-amino-acid chain: tRNA dimethylallyltransferase (314 aa).

11-18 (GPTGSGKT) contacts ATP. 13–18 (TGSGKT) is a substrate binding site. The interval 36 to 39 (DSMQ) is interaction with substrate tRNA.

It belongs to the IPP transferase family. In terms of assembly, monomer. Mg(2+) is required as a cofactor.

The catalysed reaction is adenosine(37) in tRNA + dimethylallyl diphosphate = N(6)-dimethylallyladenosine(37) in tRNA + diphosphate. Catalyzes the transfer of a dimethylallyl group onto the adenine at position 37 in tRNAs that read codons beginning with uridine, leading to the formation of N6-(dimethylallyl)adenosine (i(6)A). The chain is tRNA dimethylallyltransferase from Chlamydia muridarum (strain MoPn / Nigg).